A 131-amino-acid polypeptide reads, in one-letter code: Methylglyoxal synthase (131 aa).

Residues 1-131 form the MGS-like domain; it reads MKIALIAHDK…GDLDYRKLRK (131 aa). Substrate-binding positions include histidine 8, lysine 12, 34-37, and 54-55; these read TGTT and SG. Catalysis depends on aspartate 60, which acts as the Proton donor/acceptor. A substrate-binding site is contributed by histidine 87.

Belongs to the methylglyoxal synthase family.

It carries out the reaction dihydroxyacetone phosphate = methylglyoxal + phosphate. Its function is as follows. Catalyzes the formation of methylglyoxal from dihydroxyacetone phosphate. This chain is Methylglyoxal synthase, found in Bacillus cereus (strain AH820).